A 298-amino-acid polypeptide reads, in one-letter code: 4-hydroxy-tetrahydrodipicolinate synthase (298 aa).

Position 51 (Thr-51) interacts with pyruvate. The active-site Proton donor/acceptor is the Tyr-139. Lys-167 (schiff-base intermediate with substrate) is an active-site residue. Position 209 (Ile-209) interacts with pyruvate.

Belongs to the DapA family. Homotetramer; dimer of dimers.

It localises to the cytoplasm. The enzyme catalyses L-aspartate 4-semialdehyde + pyruvate = (2S,4S)-4-hydroxy-2,3,4,5-tetrahydrodipicolinate + H2O + H(+). The protein operates within amino-acid biosynthesis; L-lysine biosynthesis via DAP pathway; (S)-tetrahydrodipicolinate from L-aspartate: step 3/4. Its function is as follows. Catalyzes the condensation of (S)-aspartate-beta-semialdehyde [(S)-ASA] and pyruvate to 4-hydroxy-tetrahydrodipicolinate (HTPA). In Pasteurella multocida (strain Pm70), this protein is 4-hydroxy-tetrahydrodipicolinate synthase.